A 674-amino-acid chain; its full sequence is Pannexin-2 (674 aa).

At 11-53 (MATALLAGEKLRELILPGSQDDKAGALAALLLQLKLELPFDRV) the chain is on the cytoplasmic side. The helical transmembrane segment at 54 to 74 (VTIGTVLVPILLVTLVFTKNF) threads the bilayer. The Extracellular portion of the chain corresponds to 75–125 (AEEPIYCYTPHNFTRDQALYARGYCWTELRDALPGVDASLWPSLFEHKFLP). Asn-86 carries N-linked (GlcNAc...) asparagine glycosylation. A helical transmembrane segment spans residues 126–146 (YALLAFAAIMYVPALGWEFLA). Topologically, residues 147–230 (STRLTSELNF…NFLAKLYLAR (84 aa)) are cytoplasmic. The chain crosses the membrane as a helical span at residues 231–251 (HVLILLLSVVPISYLCTYYAT). Over 252–295 (QKQNEFTCALGASPDGPVGSAGPTVRVSCKLPSVQLQRIIAGVD) the chain is Extracellular. Residues 296–316 (IVLLCFMNLIILVNLIHLFIF) form a helical membrane-spanning segment. Residues 317–674 (RKSNFIFDKL…PRTVVSTVEF (358 aa)) are Cytoplasmic-facing. The segment covering 394-408 (TTPTVRDSGIQTVDP) has biased composition (polar residues). 2 disordered regions span residues 394-426 (TTPTVRDSGIQTVDPSINPAEPEGSAEPPVVKR) and 485-510 (AHHYKGSGGDTGPSSAPPAASEKKHT). Ser-590 and Ser-601 each carry phosphoserine.

This sequence belongs to the pannexin family. In terms of assembly, forms PANX1/PANX2-heteromeric intercellular channels on coexpression in paired Xenopus oocytes. Does not form homomeric channels. S-palmitoylated in neural stem and progenitor cells. In terms of processing, cleaved by CASP3 and CASP7 during apoptosis. Cleavage has no effect on it function. As to expression, expressed in the eye, thyroid, prostate, kidney and liver. Abundantly expressed in the CNS, including hippocampus, olfactory bulb, cortex, cerebellum. Not detected in the white matter.

It localises to the cell membrane. The protein resides in the golgi apparatus membrane. Its subcellular location is the endoplasmic reticulum membrane. In terms of biological role, structural component of the gap junctions and the hemichannels. This Rattus norvegicus (Rat) protein is Pannexin-2 (Panx2).